Here is a 378-residue protein sequence, read N- to C-terminus: MSHVDDGFRSLTLKRFPQTDDVNPLLAWEAADEYLLQQLDETEIRGPVLILNDTFGALSCALAEHSPYSIGDSYLSELGTRENLRHNGIAESSVTFLDSTADYPQAPGVVLIKVPKTLALLEQQLRALRKVVTAQTRIIAGAKARDIHTSTLELFEKVLGPTTTTLAWKKARLINCTFSHPQLPDAPQTLSWKLEDTGWTIHNHANVFSRTGLDIGARFFMQHLPENLDGEIVDLGCGNGVIGLSLLAKNPQAKVVFVDESPMAVDSSRLNVETNLPEAFERCEFMINNALSGVEPFRFNAVFCNPPFHQKHALTDNIAWEMFHHARRCLKINGELYIVANRHLDYFHKLKKIFGNCATIATNNKFVILKAVKQGRRR.

The protein belongs to the methyltransferase superfamily. RlmG family.

It is found in the cytoplasm. It catalyses the reaction guanosine(1835) in 23S rRNA + S-adenosyl-L-methionine = N(2)-methylguanosine(1835) in 23S rRNA + S-adenosyl-L-homocysteine + H(+). Specifically methylates the guanine in position 1835 (m2G1835) of 23S rRNA. The sequence is that of Ribosomal RNA large subunit methyltransferase G from Salmonella newport (strain SL254).